Reading from the N-terminus, the 609-residue chain is mRNA cap guanine-N(7) methyltransferase (609 aa).

Basic and acidic residues predominate over residues 1–10 (MASKEEERTG). A disordered region spans residues 1 to 252 (MASKEEERTG…EEDAMRNSQS (252 aa)). Composition is skewed to low complexity over residues 28–47 (QPVV…ATPT) and 70–87 (PQTT…QQKQ). Over residues 148–163 (ANDRPISKRKRLEERH) the composition is skewed to basic and acidic residues. A compositionally biased stretch (pro residues) spans 193–205 (PRSPSPPLPPRSP). A compositionally biased stretch (basic and acidic residues) spans 233–247 (RRQEERERALEEDAM). The region spanning 278–590 (SKIKGLRSFN…KYTPLGFTSA (313 aa)) is the mRNA cap 0 methyltransferase domain. 287–288 (NN) serves as a coordination point for mRNA. Residues K291, G314, D338, D379, 422–424 (MFA), and Y427 each bind S-adenosyl-L-methionine.

Belongs to the class I-like SAM-binding methyltransferase superfamily. mRNA cap 0 methyltransferase family.

It localises to the nucleus. It catalyses the reaction a 5'-end (5'-triphosphoguanosine)-ribonucleoside in mRNA + S-adenosyl-L-methionine = a 5'-end (N(7)-methyl 5'-triphosphoguanosine)-ribonucleoside in mRNA + S-adenosyl-L-homocysteine. Functionally, responsible for methylating the 5'-cap structure of mRNAs. In Aspergillus niger (strain ATCC MYA-4892 / CBS 513.88 / FGSC A1513), this protein is mRNA cap guanine-N(7) methyltransferase (abd1).